A 122-amino-acid chain; its full sequence is Large ribosomal subunit protein bL12 (122 aa).

It belongs to the bacterial ribosomal protein bL12 family. Homodimer. Part of the ribosomal stalk of the 50S ribosomal subunit. Forms a multimeric L10(L12)X complex, where L10 forms an elongated spine to which 2 to 4 L12 dimers bind in a sequential fashion. Binds GTP-bound translation factors.

Its function is as follows. Forms part of the ribosomal stalk which helps the ribosome interact with GTP-bound translation factors. Is thus essential for accurate translation. The polypeptide is Large ribosomal subunit protein bL12 (Pasteurella multocida (strain Pm70)).